Consider the following 207-residue polypeptide: Uridine kinase (207 aa).

Position 11–18 (11–18) interacts with ATP; the sequence is GGSGSGKT.

Belongs to the uridine kinase family.

It localises to the cytoplasm. It carries out the reaction uridine + ATP = UMP + ADP + H(+). The enzyme catalyses cytidine + ATP = CMP + ADP + H(+). It functions in the pathway pyrimidine metabolism; CTP biosynthesis via salvage pathway; CTP from cytidine: step 1/3. Its pathway is pyrimidine metabolism; UMP biosynthesis via salvage pathway; UMP from uridine: step 1/1. This Staphylococcus epidermidis (strain ATCC 35984 / DSM 28319 / BCRC 17069 / CCUG 31568 / BM 3577 / RP62A) protein is Uridine kinase.